The primary structure comprises 551 residues: Probable inorganic carbon transporter subunit DabB2 (551 aa).

The next 14 helical transmembrane spans lie at 6-26 (SHTT…AAVI), 42-62 (VQWT…SFLF), 65-85 (QQNL…LALS), 86-106 (IQVN…LSVI), 132-152 (GFFL…AIIA), 187-207 (LLLA…FSQI), 217-237 (LSIA…LKSA), 252-272 (PTPV…IIVL), 284-304 (ALLL…LVML), 321-341 (LGFM…LHLV), 374-394 (VVAW…IAAA), 404-424 (MLPA…LKAL), 434-454 (VAAG…EVFI), and 469-489 (PLLD…VAWL).

This sequence belongs to the inorganic carbon transporter (TC 9.A.2) DabB family. Forms a complex with DabA2, possibly a heterodimer.

It is found in the cell inner membrane. Its activity is regulated as follows. Uptake of inorganic carbon by cells in the presence of thiosulphate is fully inhibited by the uncouplers carbonyl cyanide m-chlorophenyl hydrazone (CCCP), carbonyl cyanide p-trifluoromethoxyphenyl hydrazone (FCCP), S13 or SF6847. Not inhibited by the ATPase inhibitor N,N-dicyclohexylcarbodiimide (DCCD). Inorganic carbon uptake is inhibited by the ionophore carbonyl cyanide m-chlorophenyl hydrazone (CCCP), suggesting uptake is coupled to a cation gradient. Its function is as follows. Part of an energy-coupled inorganic carbon pump; its substrate may be carbon dioxide. Expression of both dabA2 and dabB2 (DAB2) restores growth in ambient air to E.coli deleted of its carbonic anhydrase genes (called CAfree, deletion of 'can' and 'cynT'); neither dabA2 or dabB2 alone is sufficient. Rescue is pH-independent, suggesting it transports CO(2) and not carbonate ions. Together the genes allow greater than normal uptake of inorganic carbon by E.coli. Uptake of carbon dioxide rather than bicarbonate has been suggested based on kinetic calculations. This is Probable inorganic carbon transporter subunit DabB2 from Halothiobacillus neapolitanus (strain ATCC 23641 / c2) (Thiobacillus neapolitanus).